The chain runs to 481 residues: Proline--tRNA ligase (481 aa).

The protein belongs to the class-II aminoacyl-tRNA synthetase family. ProS type 3 subfamily. In terms of assembly, homodimer.

Its subcellular location is the cytoplasm. The catalysed reaction is tRNA(Pro) + L-proline + ATP = L-prolyl-tRNA(Pro) + AMP + diphosphate. Catalyzes the attachment of proline to tRNA(Pro) in a two-step reaction: proline is first activated by ATP to form Pro-AMP and then transferred to the acceptor end of tRNA(Pro). The protein is Proline--tRNA ligase of Chloroherpeton thalassium (strain ATCC 35110 / GB-78).